Reading from the N-terminus, the 99-residue chain is MARITVEDCLEVVNNRFELVMMASKRARQLANGVPPLIENTNSEDKPTVMALREIAARKINSKMIDEIEKAERERAEREAMEWAAAEVVADEDMSKSDD.

Belongs to the RNA polymerase subunit omega family. In terms of assembly, the RNAP catalytic core consists of 2 alpha, 1 beta, 1 beta' and 1 omega subunit. When a sigma factor is associated with the core the holoenzyme is formed, which can initiate transcription.

It carries out the reaction RNA(n) + a ribonucleoside 5'-triphosphate = RNA(n+1) + diphosphate. Its function is as follows. Promotes RNA polymerase assembly. Latches the N- and C-terminal regions of the beta' subunit thereby facilitating its interaction with the beta and alpha subunits. In Xylella fastidiosa (strain Temecula1 / ATCC 700964), this protein is DNA-directed RNA polymerase subunit omega.